Here is a 358-residue protein sequence, read N- to C-terminus: MRDRLLAAEKVKAIDWRDDALYLLDQRVLPFEEVWHRYTTAAGVAEAIRTMVVRGAPAIGISAAYGAVLGARARIAEGGDWYPALEEDMQLLADSRPTAVNLFWALNRIRDRLMRVKNGDNPLAALEAEAVAIHLSDREANLTMAQLGADLIRKHQGNLQTVLTHCNTGALATGGFGTALGVIRAAHLEGMIERVYADETRPWLQGSRLTAWELANEGIPVTLNADSAAAHLMRTKGITWVIVGADRITANGDVANKIGTYQLAVAAMHHGVRFMVVAPSSTIDMEMASGDDIIIEERDGRELLEVGGQRVGADVEAFNPVFDVTPADLIDAIVTEKGIVERPDTARMAQLMSRKHLH.

Residues 54-56 (RGA), Arg-96, and Gln-205 each bind substrate. Catalysis depends on Asp-246, which acts as the Proton donor. 256–257 (NK) lines the substrate pocket.

This sequence belongs to the eIF-2B alpha/beta/delta subunits family. MtnA subfamily.

The enzyme catalyses 5-(methylsulfanyl)-alpha-D-ribose 1-phosphate = 5-(methylsulfanyl)-D-ribulose 1-phosphate. It participates in amino-acid biosynthesis; L-methionine biosynthesis via salvage pathway; L-methionine from S-methyl-5-thio-alpha-D-ribose 1-phosphate: step 1/6. Its function is as follows. Catalyzes the interconversion of methylthioribose-1-phosphate (MTR-1-P) into methylthioribulose-1-phosphate (MTRu-1-P). This chain is Methylthioribose-1-phosphate isomerase, found in Pseudomonas syringae pv. tomato (strain ATCC BAA-871 / DC3000).